Reading from the N-terminus, the 140-residue chain is Transcription antitermination protein NusB (140 aa).

It belongs to the NusB family.

Its function is as follows. Involved in transcription antitermination. Required for transcription of ribosomal RNA (rRNA) genes. Binds specifically to the boxA antiterminator sequence of the ribosomal RNA (rrn) operons. The chain is Transcription antitermination protein NusB from Alteromonas mediterranea (strain DSM 17117 / CIP 110805 / LMG 28347 / Deep ecotype).